Consider the following 425-residue polypeptide: MPLLWLRGFLLASCWIIVRSSPTPGSEGHSAAPDCPSCALATLPKDVPNSQPEMVEAVKKHILNMLHLKKRPDVTQPVPKAALLNAIRKLHVGKVGENGYVEIEDDIGRRAEMNELMEQTSEIITFAESGTARKTLHFEISKEGSDLSVVERAEIWLFLKVPKANRTRSKVTIRLFQQQKHLQGSLDAGEEAEEVGLKGEKSEMLISEKVVDARKSTWHIFPVSSCIQRLLDQGKSSLDIRIACEQCQETGASLVLLGKKKKKEEEGEGKKRDGEGGAGGDEEKEQSHRPFLMLQARQSEDHPHRRRRRGLECDGKVNICCKKQFFVSFKDIGWNDWIIAPSGYHANYCEGECPSHIAGTSGSSLSFHSTVINHYRMRGHSPFANLKSCCVPTKLRPMSMLYYDDGQNIIKKDIQNMIVEECGCS.

The signal sequence occupies residues M1–S20. Residues S21–R309 constitute a propeptide that is removed on maturation. N165 carries N-linked (GlcNAc...) asparagine glycosylation. The segment at K259–R289 is disordered. Over residues K263–E275 the composition is skewed to basic and acidic residues. Disulfide bonds link C313/C321, C320/C390, C349/C422, and C353/C424.

This sequence belongs to the TGF-beta family. As to quaternary structure, dimeric, linked by one or more disulfide bonds. Inhibin A is a dimer of alpha/INHA and beta-A/INHBA. Activin A is a homodimer of beta-A/INHBA. Activin AB is a dimer of beta-A/INHBA and beta-B/INHBB. Interacts with FST and FSTL3; these interactions prevent activin A interaction to its type II receptor. Activin A interacts with ACVR2A. Activin A interacts with BMPR2. Inhibin A interacts with ACVR1; this interaction creates a non-signaling complex (NSC) that inhibits ACVR1-mediated BMP signaling. Inhibin A interacts with ACVR2A.

It localises to the secreted. Its function is as follows. Inhibins/activins are involved in regulating a number of diverse functions such as hypothalamic and pituitary hormone secretion, gonadal hormone secretion, germ cell development and maturation, erythroid differentiation, insulin secretion, nerve cell survival, embryonic axial development or bone growth, depending on their subunit composition. Functionally, activin A is a homodimer of INHBA that plays a role in several essential biological processes including embryonic development, stem cell maintenance and differentiation, haematopoiesis, cell proliferation and tissue fibrosis. Signals through type I (such as ACVR1B or ACVR1C) and type II receptors (such as ACVR2A, ACVR2B or BMPR2) which, upon ligand binding, phosphorylate SMAD2 and SMAD3 intracellular signaling mediators that form a complex with SMAD4, translocate to the nucleus and modulate gene expression. Can also activate alternative non-canonical intracellular signaling pathways including the p38 MAPK, extracellular signal-regulated kinases 1/2 (ERK1/2) and c-Jun N-terminal kinases (JNKs) to modulate cell migration and differentiation. Alternatively, promotes osteoblastic differentiation via ACVRL1-SMAD1/5/9 pathway. In addition, can engage the type I receptor ACVR1 to form an ACVR1-activin A-type II receptor non-signaling complex (NSC) that renders receptors unavailable for engagement with BMPs, hence resulting in an apparent inhibition of ACVR1-mediated BMP signaling. In terms of biological role, inhibin A is a dimer of alpha/INHA and beta-A/INHBA that functions as a feedback regulator in the hypothalamic-pituitary-gonadal (HPG) axis. Inhibits the secretion of FSH from the anterior pituitary gland by acting on pituitary gonadotrope cells. Antagonizes activin A by binding to the proteoglycan, betaglycan, and forming a stable complex with and, thereby, sequestering type II activin receptors while excluding type I receptor. This is Inhibin beta A chain (INHBA) from Bos taurus (Bovine).